Consider the following 95-residue polypeptide: MNVYEIIRRPVVTEKSTIQKEENNQLTFEVDKKANKVEIARAIERIFKVKVLDVRTSTVNGKFKRRGKVLGKRRDWKKAMVTLAPGARIDFFDGV.

It belongs to the universal ribosomal protein uL23 family. In terms of assembly, part of the 50S ribosomal subunit. Contacts protein L29, and trigger factor when it is bound to the ribosome.

In terms of biological role, one of the early assembly proteins it binds 23S rRNA. One of the proteins that surrounds the polypeptide exit tunnel on the outside of the ribosome. Forms the main docking site for trigger factor binding to the ribosome. The polypeptide is Large ribosomal subunit protein uL23 (Desulfatibacillum aliphaticivorans).